Consider the following 260-residue polypeptide: Transmembrane protein 70, mitochondrial (260 aa).

A mitochondrion-targeting transit peptide spans Met-1–Phe-81. Over Leu-82–Arg-102 the chain is Mitochondrial matrix. The chain crosses the membrane as a helical span at residues Ala-103 to Pro-123. At Tyr-124 to Gln-141 the chain is on the mitochondrial intermembrane side. Residues Ile-142–Ile-162 form a helical membrane-spanning segment. Over Thr-163–Lys-260 the chain is Mitochondrial matrix.

This sequence belongs to the TMEM70 family. In terms of assembly, homooligomer. Interacts (homooligomer form) with ATP5MC1; this interaction facilitates the oligomer formation of subunit c/ATP5MC1 (c-ring) and the c-ring membrane insertion and also protects ATP5MC1 against intramitochondrial proteolysis. Interacts with the core subunits TMEM126B, NDUFAF1, ECSIT and ACAD9 of the MCIA complex. Interacts with ATP5MC3, TMEM242 and TIMMDC1. Lower expressed in the heart than in the liver (at protein level).

It localises to the mitochondrion inner membrane. Functionally, scaffold protein that participates in the c-ring assembly of mitochondrial ATP synthase (F(1)F(0) ATP synthase or complex V) by facilitating the membrane insertion and oligomer formation of the subunit c/ATP5MC1 through its interaction. Therefore, participates in the early stage of mitochondrial ATP synthase biogenesis and also protects subunit c/ATP5MC1 against intramitochondrial proteolysis. In addition, binds the mitochondrial proton-transporting ATP synthase complexes I and may play a role in the stability of its membrane-bound subassemblies. The protein is Transmembrane protein 70, mitochondrial of Homo sapiens (Human).